Consider the following 332-residue polypeptide: F-box/SPRY domain-containing protein 1 (332 aa).

Residues 1-10 (MTENNEETIV) are compositionally biased toward acidic residues. The tract at residues 1-81 (MTENNEETIV…RRSPRRPEVS (81 aa)) is disordered. The segment covering 15–24 (CNLTSSTPMK) has biased composition (polar residues). One can recognise an F-box domain in the interval 79–127 (EVSASRLPLKVLNQIFQYLSLKDLRSAMLTCHSWNNALSMEDSDIWQQL). Positions 138 to 330 (SDPFLFVELR…VTMVYVGSPQ (193 aa)) constitute a B30.2/SPRY domain.

It belongs to the FBXO45/Fsn family. In terms of assembly, component of an SCF (SKP1-CUL1-F-box protein) E3 ubiquitin ligase complex composed of cul-1, fsn-1, rpm-1 and skr-1. Interacts (via SPRY domain) with scd-2 (via cytoplasmic domain). Interacts (via SPRY domain) with convertase egl-3 (via C-terminus).

The protein localises to the synapse. It functions in the pathway protein modification; protein ubiquitination. Functionally, component of a SCF (SKP1-CUL1-F-box protein) E3 ubiquitin ligase complex which is required for the restriction and/or maturation of synapses in GABAergic neuromuscular junction (NMJ) presynaptic neurons. Promotes NRJ synapse development and synaptic transmission by negatively regulating the daf-2/InsR pathway in muscles. By targeting convertase egl-3 for degradation, negatively modulates insulin-like protein ins-4 and ins-6 processing. May stabilize synapse formation by promoting the down-regulation of scd-2. Regulates axon termination in PLM and ALM neurons. This Caenorhabditis briggsae protein is F-box/SPRY domain-containing protein 1 (fsn-1).